We begin with the raw amino-acid sequence, 262 residues long: 3-methyl-2-oxobutanoate hydroxymethyltransferase (262 aa).

The Mg(2+) site is built by Asp-44 and Asp-83. Residues 44–45 (DS), Asp-83, and Lys-112 each bind 3-methyl-2-oxobutanoate. Glu-114 is a Mg(2+) binding site. Residue Glu-181 is the Proton acceptor of the active site.

It belongs to the PanB family. In terms of assembly, homodecamer; pentamer of dimers. Mg(2+) serves as cofactor.

Its subcellular location is the cytoplasm. The enzyme catalyses 3-methyl-2-oxobutanoate + (6R)-5,10-methylene-5,6,7,8-tetrahydrofolate + H2O = 2-dehydropantoate + (6S)-5,6,7,8-tetrahydrofolate. It participates in cofactor biosynthesis; (R)-pantothenate biosynthesis; (R)-pantoate from 3-methyl-2-oxobutanoate: step 1/2. Catalyzes the reversible reaction in which hydroxymethyl group from 5,10-methylenetetrahydrofolate is transferred onto alpha-ketoisovalerate to form ketopantoate. In Thiobacillus denitrificans (strain ATCC 25259 / T1), this protein is 3-methyl-2-oxobutanoate hydroxymethyltransferase.